Consider the following 125-residue polypeptide: Ribosome-binding factor A (125 aa).

This sequence belongs to the RbfA family. As to quaternary structure, monomer. Binds 30S ribosomal subunits, but not 50S ribosomal subunits or 70S ribosomes.

The protein localises to the cytoplasm. Functionally, one of several proteins that assist in the late maturation steps of the functional core of the 30S ribosomal subunit. Associates with free 30S ribosomal subunits (but not with 30S subunits that are part of 70S ribosomes or polysomes). Required for efficient processing of 16S rRNA. May interact with the 5'-terminal helix region of 16S rRNA. The sequence is that of Ribosome-binding factor A from Acidovorax sp. (strain JS42).